Reading from the N-terminus, the 121-residue chain is Small ribosomal subunit protein uS13 (121 aa).

The interval 96 to 121 (PVRGQNTKNNARTRKGKAVAIAGKKK) is disordered. Over residues 106-121 (ARTRKGKAVAIAGKKK) the composition is skewed to basic residues.

Belongs to the universal ribosomal protein uS13 family. As to quaternary structure, part of the 30S ribosomal subunit. Forms a loose heterodimer with protein S19. Forms two bridges to the 50S subunit in the 70S ribosome.

Its function is as follows. Located at the top of the head of the 30S subunit, it contacts several helices of the 16S rRNA. In the 70S ribosome it contacts the 23S rRNA (bridge B1a) and protein L5 of the 50S subunit (bridge B1b), connecting the 2 subunits; these bridges are implicated in subunit movement. Contacts the tRNAs in the A and P-sites. The polypeptide is Small ribosomal subunit protein uS13 (Streptococcus suis (strain 05ZYH33)).